Consider the following 277-residue polypeptide: Carbonyl reductase [NADPH] 1 (277 aa).

Position 2 is an N-acetylserine (S2). A phosphoserine mark is found at S2 and S30. NADP(+) contacts are provided by residues V10–V34, D63–I64, and N90. Glutathione-binding positions include F95 to V97 and Q106. S140 is a substrate binding site. A193–Y194 contacts glutathione. Y194 functions as the Proton acceptor in the catalytic mechanism. Residues Y194–K198 and V231–T233 contribute to the NADP(+) site. K239 carries the post-translational modification N6-1-carboxyethyl lysine. Positions P258 to W277 are disordered.

It belongs to the short-chain dehydrogenases/reductases (SDR) family. As to quaternary structure, monomer.

It is found in the cytoplasm. The enzyme catalyses a secondary alcohol + NADP(+) = a ketone + NADPH + H(+). It carries out the reaction prostaglandin F2alpha + NADP(+) = prostaglandin E2 + NADPH + H(+). It catalyses the reaction prostaglandin E1 + NADP(+) = 15-oxoprostaglandin E1 + NADPH + H(+). The catalysed reaction is menadione + NADPH + H(+) = menadiol + NADP(+). The enzyme catalyses prostaglandin D2 + NADP(+) = 15-oxoprostaglandin D2 + NADPH + H(+). It carries out the reaction prostaglandin E2 + NADP(+) = 15-oxoprostaglandin E2 + NADPH + H(+). It catalyses the reaction prostaglandin F2alpha + NADP(+) = 15-oxoprostaglandin F2alpha + NADPH + H(+). The catalysed reaction is daunorubicin + NADPH + H(+) = 13-dihydrodaunorubicin + NADP(+). The enzyme catalyses S-nitrosoglutathione + NADPH + H(+) = S-(hydroxysulfenamide)glutathione + NADP(+). It carries out the reaction corticosterone + NADPH + H(+) = 20beta-dihydrocorticosterone + NADP(+). It catalyses the reaction a primary alcohol + NADP(+) = an aldehyde + NADPH + H(+). The catalysed reaction is cortisol + NADPH + H(+) = 20beta-dihydrocortisol + NADP(+). Functionally, NADPH-dependent reductase with broad substrate specificity. Catalyzes the reduction of a wide variety of carbonyl compounds including quinones, prostaglandins, menadione, plus various xenobiotics. Catalyzes the reduction of the antitumor anthracyclines doxorubicin and daunorubicin to the cardiotoxic compounds doxorubicinol and daunorubicinol. Can convert prostaglandin E to prostaglandin F2-alpha. Can bind glutathione, which explains its higher affinity for glutathione-conjugated substrates. Catalyzes the reduction of S-nitrosoglutathione. In addition, participates in the glucocorticoid metabolism by catalyzing the NADPH-dependent cortisol/corticosterone into 20beta-dihydrocortisol (20b-DHF) or 20beta-corticosterone (20b-DHB), which are weak agonists of NR3C1 and NR3C2 in adipose tissue. The chain is Carbonyl reductase [NADPH] 1 from Mus musculus (Mouse).